The primary structure comprises 283 residues: Protein FAM170A (283 aa).

Disordered regions lie at residues methionine 1 to histidine 54 and glycine 123 to proline 171. Positions serine 127–serine 138 are enriched in polar residues. Residues glycine 142–serine 153 are compositionally biased toward basic and acidic residues. Residue threonine 170 is modified to Phosphothreonine. The C2H2-type; degenerate zinc finger occupies phenylalanine 181 to arginine 205. Residues asparagine 223 to serine 283 form a disordered region. Acidic residues predominate over residues serine 228–lysine 246. A Phosphoserine modification is found at serine 268.

This sequence belongs to the FAM170 family.

The protein localises to the nucleus. In terms of biological role, acts as a nuclear transcription factor that positively regulates the expression of heat shock genes. Binds to heat shock promoter elements (HSE). The polypeptide is Protein FAM170A (FAM170A) (Macaca fascicularis (Crab-eating macaque)).